A 1019-amino-acid chain; its full sequence is Outer capsid protein P3 (1019 aa).

This sequence belongs to the phytoreovirus inner capsid protein P3 family. Homodimer. Homomultimer.

It localises to the virion. It is found in the host cytoplasm. Capsid protein which self-assembles to form the inner icosahedral capsid with a T=2 symmetry, and consisting of 60 P3 dimers. The chain is Outer capsid protein P3 from Rice dwarf virus (isolate Fujian) (RDV).